Consider the following 856-residue polypeptide: DNA mismatch repair protein MutS (856 aa).

607-614 lines the ATP pocket; it reads GPNMSGKS.

The protein belongs to the DNA mismatch repair MutS family.

Its function is as follows. This protein is involved in the repair of mismatches in DNA. It is possible that it carries out the mismatch recognition step. This protein has a weak ATPase activity. This Lactobacillus delbrueckii subsp. bulgaricus (strain ATCC 11842 / DSM 20081 / BCRC 10696 / JCM 1002 / NBRC 13953 / NCIMB 11778 / NCTC 12712 / WDCM 00102 / Lb 14) protein is DNA mismatch repair protein MutS.